The chain runs to 597 residues: DDB1- and CUL4-associated factor 8 (597 aa).

Polar residues predominate over residues 1–24 (MSSKGSSTDGRTDLANGSLSSSPE). The segment at 1–147 (MSSKGSSTDG…DWVSSETSAL (147 aa)) is disordered. 2 positions are modified to phosphoserine: serine 21 and serine 22. The Nuclear export signal motif lies at 39 to 50 (IEVEASDLSLSL). Residues 65–99 (RGTDTESSGEDKDSDSMEDTGHYSINDENRVHDRS) are compositionally biased toward basic and acidic residues. Serine 99 bears the Phosphoserine mark. Over residues 100 to 112 (EEEEEEEEEEEEE) the composition is skewed to acidic residues. A Nuclear localization signal motif is present at residues 114–122 (PRRRVQRKR). Residues 124 to 137 (NRDQDSSDDERALE) are compositionally biased toward basic and acidic residues. Serine 129 and serine 130 each carry phosphoserine. WD repeat units follow at residues 191–230 (GHTG…PVLD), 234–275 (GHKS…CCKN), 281–321 (QHKG…PASK), 329–369 (EKKV…ENEN), 385–424 (ESKA…GAQY), 432–472 (RNNA…IIQF), and 476–515 (DKGG…STEL). At arginine 204 the chain carries Omega-N-methylarginine; by PRMT1. The segment at 558 to 597 (HRRWREPGVGATDADSDESPSSSDTSDEEEGPDRVQCMPS) is disordered.

Belongs to the WD repeat DCAF8 family. In terms of assembly, interacts with DDB1, CUL4A and CUL4B. Interacts with KPNA1, KPNB1 and XPO1.

It localises to the nucleus. It is found in the cytoplasm. It functions in the pathway protein modification; protein ubiquitination. May function as a substrate receptor for CUL4-DDB1 E3 ubiquitin-protein ligase complex. The polypeptide is DDB1- and CUL4-associated factor 8 (DCAF8) (Homo sapiens (Human)).